The chain runs to 336 residues: DNA-directed RNA polymerase subunit alpha (336 aa).

The interval 1-232 is alpha N-terminal domain (alpha-NTD); sequence MIQKNWQELI…DQLGVFVNFD (232 aa). An alpha C-terminal domain (alpha-CTD) region spans residues 248–336; the sequence is FNPALLKKVD…DLAKRYEDQY (89 aa).

It belongs to the RNA polymerase alpha chain family. In terms of assembly, homodimer. The RNAP catalytic core consists of 2 alpha, 1 beta, 1 beta' and 1 omega subunit. When a sigma factor is associated with the core the holoenzyme is formed, which can initiate transcription.

The catalysed reaction is RNA(n) + a ribonucleoside 5'-triphosphate = RNA(n+1) + diphosphate. DNA-dependent RNA polymerase catalyzes the transcription of DNA into RNA using the four ribonucleoside triphosphates as substrates. The chain is DNA-directed RNA polymerase subunit alpha from Rhizobium radiobacter (Agrobacterium tumefaciens).